The chain runs to 117 residues: Ribonuclease P protein component (117 aa).

It belongs to the RnpA family. As to quaternary structure, consists of a catalytic RNA component (M1 or rnpB) and a protein subunit.

It catalyses the reaction Endonucleolytic cleavage of RNA, removing 5'-extranucleotides from tRNA precursor.. Functionally, RNaseP catalyzes the removal of the 5'-leader sequence from pre-tRNA to produce the mature 5'-terminus. It can also cleave other RNA substrates such as 4.5S RNA. The protein component plays an auxiliary but essential role in vivo by binding to the 5'-leader sequence and broadening the substrate specificity of the ribozyme. The protein is Ribonuclease P protein component of Lactococcus lactis subsp. cremoris (strain MG1363).